A 596-amino-acid chain; its full sequence is Probable ATP-dependent RNA helicase DDX52 (596 aa).

The residue at position 15 (Lys15) is an N6-acetyllysine. Phosphoserine is present on Ser39. Residues 68–94 are disordered; that stretch reads LPDEEKTEESQIERKKQNRKKKKITSE. The Q motif motif lies at 163 to 191; the sequence is QLDQEYKINSRLLQNILDAGFQTPTPIQM. The Helicase ATP-binding domain occupies 194–372; that stretch reads IPVMLHGREL…RLNLDSVITV (179 aa). 207–214 lines the ATP pocket; that stretch reads APTGSGKT. A DEAD box motif is present at residues 316–319; that stretch reads DESD. Residues 383–544 enclose the Helicase C-terminal domain; the sequence is TVEQELLFVG…PVPEYIKGFQ (162 aa). Positions 575-596 are disordered; the sequence is AKDKRKKVTGQNKKKVAPEDKS. Residues 577–589 are compositionally biased toward basic residues; that stretch reads DKRKKVTGQNKKK.

Belongs to the DEAD box helicase family. DDX52/ROK1 subfamily.

The protein localises to the nucleus. It localises to the nucleolus. The enzyme catalyses ATP + H2O = ADP + phosphate + H(+). This chain is Probable ATP-dependent RNA helicase DDX52 (DDX52), found in Bos taurus (Bovine).